Consider the following 157-residue polypeptide: Protein BeeE (157 aa).

It belongs to the phage portal family.

This chain is Protein BeeE (beeE), found in Escherichia coli (strain K12).